Consider the following 607-residue polypeptide: UPF0329 protein ECU06_1610 (607 aa).

Disordered regions lie at residues 312–410 (VHEV…RSKG) and 531–570 (TSSE…PPGV). Residues 313–347 (HEVKERESEEKRREEESLRNAEELLRMEEREKGEG) are compositionally biased toward basic and acidic residues. Residues 353-364 (KGKKKRGKKGAG) are compositionally biased toward basic residues. The span at 365–374 (KAKEESKEED) shows a compositional bias: basic and acidic residues. Acidic residues predominate over residues 375 to 393 (RGEEEEESVEAEVPVEEMA). Polar residues predominate over residues 531–543 (TSSEKTGKGSSPS). Over residues 549–558 (DVDEIEEDGS) the composition is skewed to acidic residues.

The protein belongs to the UPF0329 family.

This chain is UPF0329 protein ECU06_1610, found in Encephalitozoon cuniculi (strain GB-M1) (Microsporidian parasite).